The sequence spans 811 residues: Protein kinase C-binding protein NELL2a (811 aa).

Residues 1 to 18 form the signal peptide; sequence MAFLQLFVGLLCGAAVSA. One can recognise a Laminin G-like domain in the interval 54–225; that stretch reads AFMFQGSSRS…TQCPDLNRTC (172 aa). Residues asparagine 222, asparagine 290, and asparagine 295 are each glycosylated (N-linked (GlcNAc...) asparagine). Residues 269–328 form the VWFC 1 domain; sequence RTCRVKDQIYREEQSWTDGCKNCTCSNGTVRCEKILCPPLDCPDGTTPAYVTGTCCKECQ. The 43-residue stretch at 395 to 437 folds into the EGF-like 1 domain; it reads GHDFCAEENICSENSDCVNLDAGASCGCKNGFRPLRLDSAYCE. 3 disulfide bridges follow: cysteine 399–cysteine 411, cysteine 405–cysteine 420, and cysteine 422–cysteine 436. The Ca(2+) site is built by aspartate 438, isoleucine 439, and glutamate 441. The EGF-like 2; calcium-binding domain occupies 438-479; sequence DIDECAEGRHYCRENTECVNTAGSFMCVCHTGFIRIDDYSCT. 9 disulfides stabilise this stretch: cysteine 442-cysteine 455, cysteine 449-cysteine 464, cysteine 466-cysteine 478, cysteine 484-cysteine 497, cysteine 491-cysteine 506, cysteine 508-cysteine 519, cysteine 523-cysteine 533, cysteine 527-cysteine 539, and cysteine 541-cysteine 550. Asparagine 457, threonine 458, and serine 461 together coordinate Ca(2+). Residues 480-520 enclose the EGF-like 3; calcium-binding domain; that stretch reads EHDECASGQHDCDENALCFNTVGGHSCSCKPGYSGNGTVCR. Residue asparagine 515 is glycosylated (N-linked (GlcNAc...) asparagine). One can recognise an EGF-like 4 domain in the interval 521-551; the sequence is ALCDGRCLNGGSCASPNVCVCVQGFSGQNCE. Residues aspartate 553, isoleucine 554, and glutamate 556 each coordinate Ca(2+). In terms of domain architecture, EGF-like 5; calcium-binding spans 553–592; the sequence is DIDECSEGLVQCAAHATCVNLPGWYHCECRDGYHDNEVFS. 3 disulfides stabilise this stretch: cysteine 557–cysteine 570, cysteine 564–cysteine 579, and cysteine 581–cysteine 598. Residues asparagine 572, leucine 573, and tryptophan 576 each contribute to the Ca(2+) site. Ca(2+)-binding residues include aspartate 600, isoleucine 601, and glutamate 603. In terms of domain architecture, EGF-like 6; calcium-binding spans 600 to 635; sequence DIDECRTGRSTCANDTVCFNLDGGFDCRCPHGHNCS. 3 disulfides stabilise this stretch: cysteine 604-cysteine 617, cysteine 611-cysteine 626, and cysteine 628-cysteine 634. Asparagine 613 carries an N-linked (GlcNAc...) asparagine glycan. Positions 619, 620, and 623 each coordinate Ca(2+). Residue asparagine 633 is glycosylated (N-linked (GlcNAc...) asparagine). 2 VWFC domains span residues 636 to 691 and 696 to 754; these read GDCI…PECD and SQCL…PRCV.

Homotrimer.

It is found in the secreted. Its function is as follows. May regulate neuronal differentiation, polarization and axon guidance. This Danio rerio (Zebrafish) protein is Protein kinase C-binding protein NELL2a (nell2a).